Here is a 416-residue protein sequence, read N- to C-terminus: Thyroid hormone receptor alpha (416 aa).

Polar residues predominate over residues 1-13 (MEPMSNKQDSNSS). Residues 1–37 (MEPMSNKQDSNSSEGDEKGWPDVPKRKRKNSQCSMKS) form a disordered region. A modulating region spans residues 1-58 (MEPMSNKQDSNSSEGDEKGWPDVPKRKRKNSQCSMKSMSALSVSVPGYIPSYLEKDEP). The segment covering 15–24 (GDEKGWPDVP) has biased composition (basic and acidic residues). 8 residues coordinate Zn(2+): Cys-59, Cys-62, Cys-76, Cys-79, Cys-97, Cys-103, Cys-113, and Cys-116. NR C4-type zinc fingers lie at residues 59 to 79 (CVVCGDKATGYHYRCITCEGC) and 97 to 121 (CKYEGCCIIDKITRNQCQLCRFKKC). The segment at residues 59–133 (CVVCGDKATG…VGMAMDLVLD (75 aa)) is a DNA-binding region (nuclear receptor). The NR LBD domain maps to 169–413 (AEWELIRMAT…PPLFLEVFED (245 aa)). A 3,3',5-triiodo-L-thyronine-binding site is contributed by Arg-234.

It belongs to the nuclear hormone receptor family. NR1 subfamily.

The protein resides in the nucleus. Functionally, nuclear hormone receptor that can act as a repressor or activator of transcription. High affinity receptor for thyroid hormones, including triiodothyronine and thyroxine. The polypeptide is Thyroid hormone receptor alpha (thra) (Hippoglossus hippoglossus (Atlantic halibut)).